The primary structure comprises 91 residues: MNASNWSVYLILCENSAFYCGISPNPQQRLAAHTTGKGAKYTRVFKPVAMRIVAGGMDKGTALRQEIAVKKLTAAQKRQLWEQAEKMPSET.

One can recognise a GIY-YIG domain in the interval Ser4–Gln83.

This sequence belongs to the UPF0213 family.

The protein is UPF0213 protein NMC1807 of Neisseria meningitidis serogroup C / serotype 2a (strain ATCC 700532 / DSM 15464 / FAM18).